Reading from the N-terminus, the 559-residue chain is Formate--tetrahydrofolate ligase (559 aa).

68 to 75 (TPAGEGKS) lines the ATP pocket.

This sequence belongs to the formate--tetrahydrofolate ligase family.

The catalysed reaction is (6S)-5,6,7,8-tetrahydrofolate + formate + ATP = (6R)-10-formyltetrahydrofolate + ADP + phosphate. The protein operates within one-carbon metabolism; tetrahydrofolate interconversion. The chain is Formate--tetrahydrofolate ligase from Bacillus licheniformis (strain ATCC 14580 / DSM 13 / JCM 2505 / CCUG 7422 / NBRC 12200 / NCIMB 9375 / NCTC 10341 / NRRL NRS-1264 / Gibson 46).